The primary structure comprises 316 residues: tRNA dimethylallyltransferase (316 aa).

Residue 17–24 (GPTASGKT) participates in ATP binding. 19–24 (TASGKT) is a binding site for substrate. 4 interaction with substrate tRNA regions span residues 42 to 45 (DSAL), 166 to 170 (QRLSR), 247 to 252 (RCVGYR), and 280 to 287 (KRQITWLR).

This sequence belongs to the IPP transferase family. As to quaternary structure, monomer. Mg(2+) is required as a cofactor.

It catalyses the reaction adenosine(37) in tRNA + dimethylallyl diphosphate = N(6)-dimethylallyladenosine(37) in tRNA + diphosphate. Catalyzes the transfer of a dimethylallyl group onto the adenine at position 37 in tRNAs that read codons beginning with uridine, leading to the formation of N6-(dimethylallyl)adenosine (i(6)A). This is tRNA dimethylallyltransferase from Escherichia coli O45:K1 (strain S88 / ExPEC).